The chain runs to 393 residues: Na(+)/H(+) antiporter NhaA (393 aa).

Helical transmembrane passes span 24–44 (GGLV…SPLA), 58–78 (LSLL…LVGL), 96–116 (ILPG…YILF), 126–146 (GWAI…SLFG), 155–175 (IFLA…IALF), 178–198 (SDLN…LYGM), 214–234 (AVLW…GVLL), 267–287 (VAFI…FSGV), 300–320 (VAAG…FLLV), 338–358 (GVAA…LLAF), and 369–389 (MGIL…LATF).

It belongs to the NhaA Na(+)/H(+) (TC 2.A.33) antiporter family.

The protein localises to the cell inner membrane. The enzyme catalyses Na(+)(in) + 2 H(+)(out) = Na(+)(out) + 2 H(+)(in). Its function is as follows. Na(+)/H(+) antiporter that extrudes sodium in exchange for external protons. This is Na(+)/H(+) antiporter NhaA from Rhizobium etli (strain ATCC 51251 / DSM 11541 / JCM 21823 / NBRC 15573 / CFN 42).